A 272-amino-acid chain; its full sequence is Cytochrome c oxidase subunit 3 (272 aa).

Helical transmembrane passes span 20-40 (PWPL…VLFM), 45-65 (GGGE…FTWW), 89-109 (GMIL…WAFF), 128-148 (VVAI…LSSG), 166-186 (AMQG…MQGF), 204-224 (FYMA…FLFI), and 248-268 (YWHF…WWGF).

Belongs to the cytochrome c oxidase subunit 3 family. As to quaternary structure, component of the cytochrome c oxidase (complex IV, CIV), a multisubunit enzyme composed of a catalytic core of 3 subunits and several supernumerary subunits. The complex exists as a monomer or a dimer and forms supercomplexes (SCs) in the inner mitochondrial membrane with ubiquinol-cytochrome c oxidoreductase (cytochrome b-c1 complex, complex III, CIII).

The protein localises to the mitochondrion inner membrane. The catalysed reaction is 4 Fe(II)-[cytochrome c] + O2 + 8 H(+)(in) = 4 Fe(III)-[cytochrome c] + 2 H2O + 4 H(+)(out). Its function is as follows. Component of the cytochrome c oxidase, the last enzyme in the mitochondrial electron transport chain which drives oxidative phosphorylation. The respiratory chain contains 3 multisubunit complexes succinate dehydrogenase (complex II, CII), ubiquinol-cytochrome c oxidoreductase (cytochrome b-c1 complex, complex III, CIII) and cytochrome c oxidase (complex IV, CIV), that cooperate to transfer electrons derived from NADH and succinate to molecular oxygen, creating an electrochemical gradient over the inner membrane that drives transmembrane transport and the ATP synthase. Cytochrome c oxidase is the component of the respiratory chain that catalyzes the reduction of oxygen to water. Electrons originating from reduced cytochrome c in the intermembrane space (IMS) are transferred via the dinuclear copper A center (CU(A)) of subunit 2 and heme A of subunit 1 to the active site in subunit 1, a binuclear center (BNC) formed by heme A3 and copper B (CU(B)). The BNC reduces molecular oxygen to 2 water molecules using 4 electrons from cytochrome c in the IMS and 4 protons from the mitochondrial matrix. This is Cytochrome c oxidase subunit 3 (COX3) from Pylaiella littoralis (Seaweed).